The chain runs to 298 residues: UDP-N-acetylenolpyruvoylglucosamine reductase (298 aa).

Positions 26-191 (KTGGEAEYLA…LSATFSLTPG (166 aa)) constitute an FAD-binding PCMH-type domain. Residue arginine 170 is part of the active site. Serine 220 serves as the catalytic Proton donor. Glutamate 290 is a catalytic residue.

The protein belongs to the MurB family. FAD is required as a cofactor.

The protein localises to the cytoplasm. The enzyme catalyses UDP-N-acetyl-alpha-D-muramate + NADP(+) = UDP-N-acetyl-3-O-(1-carboxyvinyl)-alpha-D-glucosamine + NADPH + H(+). The protein operates within cell wall biogenesis; peptidoglycan biosynthesis. In terms of biological role, cell wall formation. The sequence is that of UDP-N-acetylenolpyruvoylglucosamine reductase from Lactobacillus helveticus (strain DPC 4571).